The sequence spans 184 residues: ATP synthase subunit delta (184 aa).

It belongs to the ATPase delta chain family. As to quaternary structure, F-type ATPases have 2 components, F(1) - the catalytic core - and F(0) - the membrane proton channel. F(1) has five subunits: alpha(3), beta(3), gamma(1), delta(1), epsilon(1). F(0) has three main subunits: a(1), b(2) and c(10-14). The alpha and beta chains form an alternating ring which encloses part of the gamma chain. F(1) is attached to F(0) by a central stalk formed by the gamma and epsilon chains, while a peripheral stalk is formed by the delta and b chains.

It localises to the cell membrane. Functionally, f(1)F(0) ATP synthase produces ATP from ADP in the presence of a proton or sodium gradient. F-type ATPases consist of two structural domains, F(1) containing the extramembraneous catalytic core and F(0) containing the membrane proton channel, linked together by a central stalk and a peripheral stalk. During catalysis, ATP synthesis in the catalytic domain of F(1) is coupled via a rotary mechanism of the central stalk subunits to proton translocation. Its function is as follows. This protein is part of the stalk that links CF(0) to CF(1). It either transmits conformational changes from CF(0) to CF(1) or is implicated in proton conduction. The sequence is that of ATP synthase subunit delta from Christiangramia forsetii (strain DSM 17595 / CGMCC 1.15422 / KT0803) (Gramella forsetii).